Here is a 231-residue protein sequence, read N- to C-terminus: NADH-ubiquinone oxidoreductase chain 4 (231 aa).

7 helical membrane-spanning segments follow: residues 1–21, 34–54, 63–85, 89–111, 128–148, 169–189, and 211–231; these read PIAG…YGII, VFLP…LTCL, IAYS…TPWG, AMAL…NTTY, MMPM…AIPP, TIIM…HMFL, and LLMT…ELVT.

Belongs to the complex I subunit 4 family.

The protein localises to the mitochondrion membrane. The catalysed reaction is a ubiquinone + NADH + 5 H(+)(in) = a ubiquinol + NAD(+) + 4 H(+)(out). Functionally, core subunit of the mitochondrial membrane respiratory chain NADH dehydrogenase (Complex I) that is believed to belong to the minimal assembly required for catalysis. Complex I functions in the transfer of electrons from NADH to the respiratory chain. The immediate electron acceptor for the enzyme is believed to be ubiquinone. The chain is NADH-ubiquinone oxidoreductase chain 4 (MT-ND4) from Sistrurus miliarius (Pigmy rattlesnake).